The sequence spans 387 residues: NADPH-dependent aldehyde reductase YqhD (387 aa).

Glycine 38, serine 40, asparagine 68, glycine 95, serine 96, aspartate 99, threonine 138, asparagine 147, glycine 149, lysine 160, tyrosine 179, and threonine 182 together coordinate NADP(+). Residues aspartate 194, histidine 198, histidine 267, and histidine 281 each contribute to the Zn(2+) site.

It belongs to the iron-containing alcohol dehydrogenase family. As to quaternary structure, homodimer. The crystals contain two dimers in the asymmetric unit. The cofactor is Zn(2+).

It carries out the reaction a primary alcohol + NADP(+) = an aldehyde + NADPH + H(+). The enzyme catalyses butan-1-ol + NADP(+) = butanal + NADPH + H(+). The catalysed reaction is 1-propanol + NADP(+) = propanal + NADPH + H(+). It catalyses the reaction allyl alcohol + NADP(+) = acrolein + NADPH + H(+). Functionally, exhibits NADPH-dependent reductase activity for a broad range of short-chain aldehydes. Shows highest catalytic efficiency toward butanal, propanal and the highly toxic aldehydes acrolein and malondialdehyde (MDA), which are produced mainly during lipid peroxidation. Mediates resistance to reactive oxygen species (ROS) elicitors, such as paraquat and potassium tellurite, probably by protecting the cell against the toxic effects of reactive aldehydes derived from membrane lipid peroxidation. Also acts, with lower efficiency, on acetaldehyde, glyceraldehyde, glycolaldehyde, methylglyoxal, glyoxal and hydroxyacetone. Could be involved in glyoxal metabolism, by catalyzing the reduction of glyoxal to glycolaldehyde, and further to 1,2-ethandiol. Catalyzes the reduction of isobutyraldehyde (2-methylpropanal) to isobutanol, and probably contributes to the production of isobutanol. Can probably catalyze the reduction of glutaraldehyde, a widely used biocide, to 1,5-pentanediol, which is non-toxic. Overexpression of YqhD protects the cells against glutaraldehyde toxicity. Can catalyze in vitro the NADPH-dependent reduction of furfural, a natural product of lignocellulosic decomposition, to the less toxic product, furfuryl alcohol. However, it is unlikely that furfural is a physiological substrate. Its function is as follows. In contrast, Sulzenbacher et al. detected significant activities only in the presence of alcohol and NADP(+). They reported in vitro NADP(+)-dependent alcohol dehydrogenase (ADH) activity towards various alcohols, with a preference for alcohols longer than C(3), but the affinity for the substrates is poor, suggesting that these compounds are not the physiological substrates. Perez et al. did not detect dehydrogenase activity with short and medium chain alcohols such as methanol, ethanol, propanol, butanol or isopropanol. In Escherichia coli (strain K12), this protein is NADPH-dependent aldehyde reductase YqhD (yqhD).